The chain runs to 364 residues: Alanine racemase (364 aa).

The active-site Proton acceptor; specific for D-alanine is the K35. K35 bears the N6-(pyridoxal phosphate)lysine mark. R131 contacts substrate. The Proton acceptor; specific for L-alanine role is filled by Y256. M304 contributes to the substrate binding site.

It belongs to the alanine racemase family. Requires pyridoxal 5'-phosphate as cofactor.

The enzyme catalyses L-alanine = D-alanine. It participates in amino-acid biosynthesis; D-alanine biosynthesis; D-alanine from L-alanine: step 1/1. Its function is as follows. Catalyzes the interconversion of L-alanine and D-alanine. May also act on other amino acids. This is Alanine racemase (alr) from Chromohalobacter salexigens (strain ATCC BAA-138 / DSM 3043 / CIP 106854 / NCIMB 13768 / 1H11).